The chain runs to 502 residues: Alpha-ketoglutarate-dependent dioxygenase FTO (502 aa).

A fe2OG dioxygenase domain region spans residues 32–324; sequence TPKDDEFYQQ…SSTHRVAECS (293 aa). Residues R96 and Y108 each coordinate substrate. N202 is a binding site for 2-oxoglutarate. Positions 210–221 are loop L1; predicted to block binding of double-stranded DNA or RNA; that stretch reads PYLKEEPYFGMG. An N6-acetyllysine modification is found at K213. Fe cation is bound by residues H228 and D230. Substrate is bound at residue 228–231; sequence HHDE. Y292 contacts 2-oxoglutarate. H304 provides a ligand contact to Fe cation. 2-oxoglutarate contacts are provided by residues 313 to 315, T317, and R319; that span reads RFS.

Belongs to the fto family. In terms of assembly, monomer. May also exist as homodimer. Fe(2+) serves as cofactor. Ubiquitous. Highly expressed in teeth and weakly in bone.

It is found in the nucleus. The protein resides in the nucleus speckle. The protein localises to the cytoplasm. The enzyme catalyses a 5'-end (N(7)-methyl 5'-triphosphoguanosine)-(N(6),2'-O-dimethyladenosine) in mRNA + 2-oxoglutarate + O2 = a 5'-end (N(7)-methyl 5'-triphosphoguanosine)-(2'-O-methyladenosine) in mRNA + formaldehyde + succinate + CO2. It carries out the reaction an N(6)-methyladenosine in mRNA + 2-oxoglutarate + O2 = an adenosine in mRNA + formaldehyde + succinate + CO2. The catalysed reaction is N(6)-methyladenosine in U6 snRNA + 2-oxoglutarate + O2 = adenosine in U6 snRNA + formaldehyde + succinate + CO2. It catalyses the reaction a 5'-end (N(7)-methyl 5'-triphosphoguanosine)-(N(6),2'-O-dimethyladenosine) in U6 snRNA + 2-oxoglutarate + O2 = a 5'-end (N(7)-methyl 5'-triphosphoguanosine)-(2'-O-methyladenosine) in U6 snRNA + formaldehyde + succinate + CO2. The enzyme catalyses an N(1)-methyladenosine in tRNA + 2-oxoglutarate + O2 = an adenosine in tRNA + formaldehyde + succinate + CO2. Its activity is regulated as follows. Activated by ascorbate. Inhibited by N-oxalylglycine, fumarate and succinate. RNA demethylase that mediates oxidative demethylation of different RNA species, such as mRNAs, tRNAs and snRNAs, and acts as a regulator of fat mass, adipogenesis and energy homeostasis. Specifically demethylates N(6)-methyladenosine (m6A) RNA, the most prevalent internal modification of messenger RNA (mRNA) in higher eukaryotes. M6A demethylation by FTO affects mRNA expression and stability. Also able to demethylate m6A in U6 small nuclear RNA (snRNA). Mediates demethylation of N(6),2'-O-dimethyladenosine cap (m6A(m)), by demethylating the N(6)-methyladenosine at the second transcribed position of mRNAs and U6 snRNA. Demethylation of m6A(m) in the 5'-cap by FTO affects mRNA stability by promoting susceptibility to decapping. Also acts as a tRNA demethylase by removing N(1)-methyladenine from various tRNAs. Has no activity towards 1-methylguanine. Has no detectable activity towards double-stranded DNA. Also able to repair alkylated DNA and RNA by oxidative demethylation: demethylates single-stranded RNA containing 3-methyluracil, single-stranded DNA containing 3-methylthymine and has low demethylase activity towards single-stranded DNA containing 1-methyladenine or 3-methylcytosine. Ability to repair alkylated DNA and RNA is however unsure in vivo. Involved in the regulation of fat mass, adipogenesis and body weight, thereby contributing to the regulation of body size and body fat accumulation. Involved in the regulation of thermogenesis and the control of adipocyte differentiation into brown or white fat cells. Regulates activity of the dopaminergic midbrain circuitry via its ability to demethylate m6A in mRNAs. In Rattus norvegicus (Rat), this protein is Alpha-ketoglutarate-dependent dioxygenase FTO.